We begin with the raw amino-acid sequence, 343 residues long: uncharacterized protein (343 aa).

Disordered stretches follow at residues 1-27 and 205-247; these read MIREWENGCPKIGKQRARDSRAQERMT and SGGL…SKRQ. Over residues 16–27 the composition is skewed to basic and acidic residues; that stretch reads RARDSRAQERMT. Residues 219 to 228 are compositionally biased toward acidic residues; the sequence is GQDDGNTDDG. A compositionally biased stretch (basic and acidic residues) spans 229 to 247; the sequence is NDVHQKGRGEVESKTSKRQ.

Dispensable for normal development and fertility. This is an uncharacterized protein from Bos taurus (Bovine).